Reading from the N-terminus, the 352-residue chain is Sulfate-binding protein (352 aa).

The first 40 residues, 1-40 (MARSAFGWGFSVIAVLMVGSITACNTTTTTEPGQGENASQ), serve as a signal peptide directing secretion.

This sequence belongs to the prokaryotic sulfate-binding protein family.

It is found in the periplasm. Its function is as follows. This protein specifically binds sulfate and is involved in its transmembrane transport. This Synechocystis sp. (strain ATCC 27184 / PCC 6803 / Kazusa) protein is Sulfate-binding protein (sbpA).